Here is a 482-residue protein sequence, read N- to C-terminus: Glutamyl-tRNA(Gln) amidotransferase subunit A (482 aa).

Active-site charge relay system residues include K75 and S150. The active-site Acyl-ester intermediate is the S174.

It belongs to the amidase family. GatA subfamily. In terms of assembly, heterotrimer of A, B and C subunits.

The enzyme catalyses L-glutamyl-tRNA(Gln) + L-glutamine + ATP + H2O = L-glutaminyl-tRNA(Gln) + L-glutamate + ADP + phosphate + H(+). Functionally, allows the formation of correctly charged Gln-tRNA(Gln) through the transamidation of misacylated Glu-tRNA(Gln) in organisms which lack glutaminyl-tRNA synthetase. The reaction takes place in the presence of glutamine and ATP through an activated gamma-phospho-Glu-tRNA(Gln). This Rippkaea orientalis (strain PCC 8801 / RF-1) (Cyanothece sp. (strain PCC 8801)) protein is Glutamyl-tRNA(Gln) amidotransferase subunit A.